A 193-amino-acid polypeptide reads, in one-letter code: Thymidine kinase (193 aa).

ATP contacts are provided by residues 14–21 (GCMFSGKT) and 87–90 (DELH). Glu-88 functions as the Proton acceptor in the catalytic mechanism. Positions 147, 150, 185, and 188 each coordinate Zn(2+).

The protein belongs to the thymidine kinase family. Homotetramer.

The protein localises to the cytoplasm. It catalyses the reaction thymidine + ATP = dTMP + ADP + H(+). The protein is Thymidine kinase of Roseiflexus sp. (strain RS-1).